We begin with the raw amino-acid sequence, 275 residues long: Anthracycline biosynthesis protein DnrV (275 aa).

2 consecutive VOC domains span residues 8–136 and 150–263; these read APAW…VWRK and SVGW…VVEL.

It functions in the pathway antibiotic biosynthesis; daunorubicin biosynthesis. The protein operates within antibiotic biosynthesis; carminomycin biosynthesis. Its function is as follows. Involved in the biosynthesis of the anthracyclines carminomycin and daunorubicin (daunomycin) which are aromatic polyketide antibiotics that exhibit high cytotoxicity and are widely applied in the chemotherapy of a variety of cancers. In vivo, it acts jointly with DoxA in the conversion of 13-deoxycarminomycin and 13-deoxydaunorubicin to yield carminomycin and daunorubicin, respectively. In vitro, it also acts jointly with DoxA in the C-14 hydroxylation of daunorubicin to form doxorubicin, although this strain is not a doxorubicin producer. In Streptomyces peucetius, this protein is Anthracycline biosynthesis protein DnrV (dnrV).